Consider the following 285-residue polypeptide: Diaminopimelate epimerase (285 aa).

Residues Asn15 and Asn68 each coordinate substrate. Residue Cys77 is the Proton donor of the active site. Substrate-binding positions include 78–79, Asn165, Asn201, and 219–220; these read GN and ER. Cys228 acts as the Proton acceptor in catalysis. 229 to 230 lines the substrate pocket; the sequence is GT.

The protein belongs to the diaminopimelate epimerase family. In terms of assembly, homodimer.

It is found in the cytoplasm. The enzyme catalyses (2S,6S)-2,6-diaminopimelate = meso-2,6-diaminopimelate. It participates in amino-acid biosynthesis; L-lysine biosynthesis via DAP pathway; DL-2,6-diaminopimelate from LL-2,6-diaminopimelate: step 1/1. In terms of biological role, catalyzes the stereoinversion of LL-2,6-diaminopimelate (L,L-DAP) to meso-diaminopimelate (meso-DAP), a precursor of L-lysine and an essential component of the bacterial peptidoglycan. The protein is Diaminopimelate epimerase of Synechococcus sp. (strain JA-2-3B'a(2-13)) (Cyanobacteria bacterium Yellowstone B-Prime).